Consider the following 336-residue polypeptide: DNA-directed RNA polymerase subunit alpha (336 aa).

The interval 1–233 (MSSNSFLTPR…EQFSFFADLE (233 aa)) is alpha N-terminal domain (alpha-NTD). The segment at 247-336 (IDPILLRPVD…YIKEPGHASS (90 aa)) is alpha C-terminal domain (alpha-CTD).

It belongs to the RNA polymerase alpha chain family. As to quaternary structure, homodimer. The RNAP catalytic core consists of 2 alpha, 1 beta, 1 beta' and 1 omega subunit. When a sigma factor is associated with the core the holoenzyme is formed, which can initiate transcription.

It carries out the reaction RNA(n) + a ribonucleoside 5'-triphosphate = RNA(n+1) + diphosphate. Its function is as follows. DNA-dependent RNA polymerase catalyzes the transcription of DNA into RNA using the four ribonucleoside triphosphates as substrates. The sequence is that of DNA-directed RNA polymerase subunit alpha from Nitrosomonas europaea (strain ATCC 19718 / CIP 103999 / KCTC 2705 / NBRC 14298).